Here is a 474-residue protein sequence, read N- to C-terminus: Bifunctional ribulose 5-phosphate reductase/CDP-ribitol pyrophosphorylase Bcs1 (474 aa).

The interval 1–238 (MNKNKNIGII…DKLFQSRSHF (238 aa)) is ribitol-5-phosphate cytidylyltransferase. A ribulose-5-phosphate reductase region spans residues 250–474 (YDMKDQVLVV…ITNILADLYK (225 aa)).

This sequence in the N-terminal section; belongs to the IspD/TarI cytidylyltransferase family. The protein in the C-terminal section; belongs to the short-chain dehydrogenases/reductases (SDR) family. Monomer.

The catalysed reaction is D-ribitol 5-phosphate + CTP + H(+) = CDP-L-ribitol + diphosphate. It catalyses the reaction D-ribitol 5-phosphate + NADP(+) = D-ribulose 5-phosphate + NADPH + H(+). The protein operates within capsule biogenesis; capsule polysaccharide biosynthesis. Catalyzes the NADPH-dependent reduction of D-ribulose 5-phosphate to D-ribitol 5-phosphate and the further reaction of D-ribitol 5-phosphate with CTP to form CDP-ribitol. In Haemophilus influenzae, this protein is Bifunctional ribulose 5-phosphate reductase/CDP-ribitol pyrophosphorylase Bcs1.